The sequence spans 227 residues: Prolactin (227 aa).

The N-terminal stretch at 1 to 28 (MNIKGSPWKGSLLLLLVSNLLLCQSVAP) is a signal peptide. Cysteine 32 and cysteine 39 are oxidised to a cystine. The residue at position 54 (serine 54) is a Phosphoserine. Asparagine 59 carries N-linked (GlcNAc...) asparagine; partial glycosylation. Serine 62, serine 118, serine 163, and serine 194 each carry phosphoserine. 2 cysteine pairs are disulfide-bonded: cysteine 86/cysteine 202 and cysteine 219/cysteine 227.

It belongs to the somatotropin/prolactin family. Interacts with PRLR.

Its subcellular location is the secreted. In terms of biological role, prolactin acts primarily on the mammary gland by promoting lactation. The sequence is that of Prolactin (PRL) from Homo sapiens (Human).